We begin with the raw amino-acid sequence, 249 residues long: Pulmonary surfactant-associated protein A (249 aa).

The first 20 residues, 1-20 (MLRWPLALTFLLLAVSGLEC), serve as a signal peptide directing secretion. Positions 28–100 (ASPGIPGTPG…PGERGPPGLP (73 aa)) constitute a Collagen-like domain. Positions 29 to 102 (SPGIPGTPGS…ERGPPGLPAH (74 aa)) are disordered. Proline 30, proline 33, proline 36, proline 42, proline 54, proline 57, proline 63, and proline 70 each carry 4-hydroxyproline. The segment covering 42–51 (PGRDGRDGIK) has biased composition (basic and acidic residues). The segment covering 84-93 (ERGEKGEPGE) has biased composition (basic and acidic residues). Residues 133 to 249 (AVGEKVFSTN…QQYRLAICEF (117 aa)) form the C-type lectin domain. 2 cysteine pairs are disulfide-bonded: cysteine 155–cysteine 247 and cysteine 225–cysteine 239. Asparagine 208 carries an N-linked (GlcNAc...) asparagine glycan. The Ca(2+) site is built by glutamate 216, arginine 218, asparagine 235, and aspartate 236.

The protein belongs to the SFTPA family. Oligomeric complex of 6 set of homotrimers.

The protein resides in the secreted. Its subcellular location is the extracellular space. The protein localises to the extracellular matrix. It is found in the surface film. Functionally, in presence of calcium ions, it binds to surfactant phospholipids and contributes to lower the surface tension at the air-liquid interface in the alveoli of the mammalian lung and is essential for normal respiration. Enhances the expression of MYO18A/SP-R210 on alveolar macrophages. The protein is Pulmonary surfactant-associated protein A (SFTPA1) of Sus scrofa (Pig).